Reading from the N-terminus, the 434-residue chain is UDP-N-acetylmuramoyl-L-alanyl-D-glutamate--2,6-diaminopimelate ligase (434 aa).

Serine 17 serves as a coordination point for UDP-N-acetyl-alpha-D-muramoyl-L-alanyl-D-glutamate. ATP is bound at residue 68–74; the sequence is GTNGKTT. UDP-N-acetyl-alpha-D-muramoyl-L-alanyl-D-glutamate-binding positions include 111–112, serine 138, glutamine 144, and arginine 146; that span reads TT. The residue at position 178 (lysine 178) is an N6-carboxylysine. Meso-2,6-diaminopimelate is bound by residues arginine 326, 350-353, glycine 401, and glutamate 405; that span reads DNPR. The Meso-diaminopimelate recognition motif signature appears at 350–353; it reads DNPR.

It belongs to the MurCDEF family. MurE subfamily. Mg(2+) is required as a cofactor. Post-translationally, carboxylation is probably crucial for Mg(2+) binding and, consequently, for the gamma-phosphate positioning of ATP.

It localises to the cytoplasm. The enzyme catalyses UDP-N-acetyl-alpha-D-muramoyl-L-alanyl-D-glutamate + meso-2,6-diaminopimelate + ATP = UDP-N-acetyl-alpha-D-muramoyl-L-alanyl-gamma-D-glutamyl-meso-2,6-diaminopimelate + ADP + phosphate + H(+). It participates in cell wall biogenesis; peptidoglycan biosynthesis. Functionally, catalyzes the addition of meso-diaminopimelic acid to the nucleotide precursor UDP-N-acetylmuramoyl-L-alanyl-D-glutamate (UMAG) in the biosynthesis of bacterial cell-wall peptidoglycan. This chain is UDP-N-acetylmuramoyl-L-alanyl-D-glutamate--2,6-diaminopimelate ligase, found in Wolinella succinogenes (strain ATCC 29543 / DSM 1740 / CCUG 13145 / JCM 31913 / LMG 7466 / NCTC 11488 / FDC 602W) (Vibrio succinogenes).